Reading from the N-terminus, the 310-residue chain is Olfactory receptor 8G3 (310 aa).

The Extracellular portion of the chain corresponds to 1–25 (MDPGNHSSVTESILAGLSEQPELQL). Asn-5 carries N-linked (GlcNAc...) asparagine glycosylation. The chain crosses the membrane as a helical span at residues 26–46 (RLFLLFLGICVVTVVGNLGMI). At 47-54 (TLIGLSSH) the chain is on the cytoplasmic side. Residues 55 to 75 (LHTPMYYFLSSLSFIDFCHST) form a helical membrane-spanning segment. The Extracellular portion of the chain corresponds to 76 to 99 (VITPKMLVNFATEKNIISYPECMA). Cys-97 and Cys-189 form a disulfide bridge. A helical membrane pass occupies residues 100-120 (QLYLFSIFAIAECHMLAAMAY). Over 121–139 (DCYVAICSPLLYNVIMSYH) the chain is Cytoplasmic. Residues 140-160 (HCFWLTVGVYILGILGSTIHT) form a helical membrane-spanning segment. Residues 161-197 (SFMLRLFLCKTNVINHYFCDLFPLLGLSCSSTYINEL) are Extracellular-facing. Residues 198–217 (LVLVLSAFNILMPALTILAS) form a helical membrane-spanning segment. Topologically, residues 218–237 (YIFIIASILRIHSTEGRSKA) are cytoplasmic. The helical transmembrane segment at 238-258 (FSTCSSHILAVAVFFGSAAFM) threads the bilayer. Residues 259–271 (YLQPSSVSSMDQR) lie on the Extracellular side of the membrane. Residues 272–292 (KVSSVFYTTIVPMLNPLIYSL) form a helical membrane-spanning segment. Topologically, residues 293 to 310 (RNKDVKLAVKKILHQTAC) are cytoplasmic.

It belongs to the G-protein coupled receptor 1 family.

The protein localises to the cell membrane. Odorant receptor. In Homo sapiens (Human), this protein is Olfactory receptor 8G3.